We begin with the raw amino-acid sequence, 541 residues long: GMP synthase [glutamine-hydrolyzing] (541 aa).

Residues 17–212 (TILVLDFGSQ…AVDICQSTTD (196 aa)) form the Glutamine amidotransferase type-1 domain. Catalysis depends on C93, which acts as the Nucleophile. Residues H186 and E188 contribute to the active site. Residues 213–416 (WTMGKFVDQE…LGIPEDLVWR (204 aa)) form the GMPS ATP-PPase domain. 241–247 (SGGVDST) contributes to the ATP binding site. The XMP site is built by R315, D478, K533, and E539.

In terms of assembly, homodimer. It depends on Mg(2+) as a cofactor.

The protein resides in the cytoplasm. It is found in the cytosol. The catalysed reaction is XMP + L-glutamine + ATP + H2O = GMP + L-glutamate + AMP + diphosphate + 2 H(+). Its pathway is purine metabolism; GMP biosynthesis; GMP from XMP (L-Gln route): step 1/1. Catalyzes the conversion of xanthine monophosphate (XMP) to GMP in the presence of glutamine and ATP through an adenyl-XMP intermediate. The polypeptide is GMP synthase [glutamine-hydrolyzing] (GUA1) (Phaeosphaeria nodorum (strain SN15 / ATCC MYA-4574 / FGSC 10173) (Glume blotch fungus)).